A 175-amino-acid chain; its full sequence is Translation initiation factor IF-3 (175 aa).

This sequence belongs to the IF-3 family. As to quaternary structure, monomer.

Its subcellular location is the cytoplasm. In terms of biological role, IF-3 binds to the 30S ribosomal subunit and shifts the equilibrium between 70S ribosomes and their 50S and 30S subunits in favor of the free subunits, thus enhancing the availability of 30S subunits on which protein synthesis initiation begins. The chain is Translation initiation factor IF-3 from Staphylococcus aureus (strain MRSA252).